The sequence spans 157 residues: Crossover junction endodeoxyribonuclease RuvC (157 aa).

Residues aspartate 7, glutamate 67, and aspartate 140 contribute to the active site. Positions 7, 67, and 140 each coordinate Mg(2+).

Belongs to the RuvC family. Homodimer which binds Holliday junction (HJ) DNA. The HJ becomes 2-fold symmetrical on binding to RuvC with unstacked arms; it has a different conformation from HJ DNA in complex with RuvA. In the full resolvosome a probable DNA-RuvA(4)-RuvB(12)-RuvC(2) complex forms which resolves the HJ. Mg(2+) is required as a cofactor.

The protein localises to the cytoplasm. The catalysed reaction is Endonucleolytic cleavage at a junction such as a reciprocal single-stranded crossover between two homologous DNA duplexes (Holliday junction).. Its function is as follows. The RuvA-RuvB-RuvC complex processes Holliday junction (HJ) DNA during genetic recombination and DNA repair. Endonuclease that resolves HJ intermediates. Cleaves cruciform DNA by making single-stranded nicks across the HJ at symmetrical positions within the homologous arms, yielding a 5'-phosphate and a 3'-hydroxyl group; requires a central core of homology in the junction. The consensus cleavage sequence is 5'-(A/T)TT(C/G)-3'. Cleavage occurs on the 3'-side of the TT dinucleotide at the point of strand exchange. HJ branch migration catalyzed by RuvA-RuvB allows RuvC to scan DNA until it finds its consensus sequence, where it cleaves and resolves the cruciform DNA. The chain is Crossover junction endodeoxyribonuclease RuvC from Rickettsia massiliae (strain Mtu5).